Here is a 429-residue protein sequence, read N- to C-terminus: ATP-sensitive inward rectifier potassium channel 12 (429 aa).

Residues 1–76 (MTAGRVNPYS…IADMFTTCVD (76 aa)) lie on the Cytoplasmic side of the membrane. Residues 77–103 (IRWRYMLLLFSLAFLVSWLLFGLIFWL) form a helical membrane-spanning segment. Arg78 and Arg80 together coordinate a 1,2-diacyl-sn-glycero-3-phospho-(1D-myo-inositol-4,5-bisphosphate). The Extracellular segment spans residues 104 to 129 (IALIHGDLENPGGDDTFKPCVLQVNG). An intrachain disulfide couples Cys123 to Cys155. Positions 130–146 (FVAAFLFSIETQTTIGY) form an intramembrane region, helical; Pore-forming. Residues Thr143, Ile144, Gly145, and Tyr146 each coordinate K(+). A Selectivity filter motif is present at residues 143 to 148 (TIGYGF). Topologically, residues 147 to 155 (GFRCVTEEC) are extracellular. Residues 156–183 (PLAVFMVVVQSIVGCIIDSFMIGAIMAK) form a helical membrane-spanning segment. 2 residues coordinate a 1,2-diacyl-sn-glycero-3-phospho-(1D-myo-inositol-4,5-bisphosphate): Lys183 and Lys188. The Cytoplasmic portion of the chain corresponds to 184-429 (MARPKKRAQT…QRSYRRESEI (246 aa)). The tract at residues 386-407 (RDEDEEDDDSRGLDDLSPDNRH) is disordered. A compositionally biased stretch (basic and acidic residues) spans 395-407 (SRGLDDLSPDNRH).

It belongs to the inward rectifier-type potassium channel family. In terms of assembly, homotetramer.

The protein localises to the membrane. The protein resides in the cell membrane. It is found in the sarcolemma. It localises to the T-tubule. The catalysed reaction is K(+)(in) = K(+)(out). With respect to regulation, activated by phosphatidylinositol 4,5-bisphosphate (PtdIns(4,5)P2). PtdIns(4,5)P2 binding to the cytoplasmic side of the channel triggers a conformation change leading to channel opening. Its function is as follows. Inward rectifying potassium channel that probably participates in controlling the resting membrane potential in electrically excitable cells. Probably participates in establishing action potential waveform and excitability of neuronal and muscle tissues. Inward rectifier potassium channels are characterized by a greater tendency to allow potassium to flow into the cell rather than out of it. Their voltage dependence is regulated by the concentration of extracellular potassium; as external potassium is raised, the voltage range of the channel opening shifts to more positive voltages. The inward rectification is mainly due to the blockage of outward current by internal magnesium. The sequence is that of ATP-sensitive inward rectifier potassium channel 12 (KCNJ12) from Gallus gallus (Chicken).